The sequence spans 111 residues: uncharacterized protein (111 aa).

A helical membrane pass occupies residues 20 to 39; it reads PVDTTGLIFFAVFASSFVLY.

The protein resides in the membrane. This is an uncharacterized protein from Saccharomyces cerevisiae (strain ATCC 204508 / S288c) (Baker's yeast).